Consider the following 317-residue polypeptide: Olfactory receptor 1082 (317 aa).

Over 1–26 (MESGNSTRRFSSFFLLGFTENPQLHF) the chain is Extracellular. Asn-5 carries N-linked (GlcNAc...) asparagine glycosylation. Residues 27–51 (LIFALFLSMYLVTVLGNLLIIMAII) form a helical membrane-spanning segment. At 52 to 58 (TQSHLHT) the chain is on the cytoplasmic side. The chain crosses the membrane as a helical span at residues 59–80 (PMYFFLANLSFVDICFTSTTIP). Residues 81 to 101 (KMLVNIYTQSKSITYEDCISQ) lie on the Extracellular side of the membrane. A disulfide bridge connects residues Cys-98 and Cys-190. A helical transmembrane segment spans residues 102 to 121 (MCVFLVFAELGNFLLAVMAY). At 122–140 (DRYVAXCHPLCYTVIVNHR) the chain is on the cytoplasmic side. Residues 141–159 (LCILLLLLSWVISIFHAFI) form a helical membrane-spanning segment. The Extracellular segment spans residues 160 to 197 (QSLIVLQLTFCGDVKIPHFFCELNQLSQLTCSDNFPSH). The chain crosses the membrane as a helical span at residues 198–220 (LIMNLVPVMLAAISFSGILYSYF). Over 221–237 (KIVSSIHSISTVQGKYK) the chain is Cytoplasmic. Residues 238-261 (AFSTCASHLSIVSLFYSTGLGVYV) form a helical membrane-spanning segment. The Extracellular segment spans residues 262 to 273 (SSAVVQSSHSAA). Residues 274-293 (SASVMYTVVTPMLNPFIYSL) traverse the membrane as a helical segment. The Cytoplasmic segment spans residues 294 to 317 (RNKDVKRALERLLEGNCKVHHWTG).

It belongs to the G-protein coupled receptor 1 family. Olfactory epithelium.

The protein resides in the cell membrane. In terms of biological role, odorant receptor. The protein is Olfactory receptor 1082 (Olr1082) of Rattus norvegicus (Rat).